Reading from the N-terminus, the 155-residue chain is Acyl-CoA-binding domain-containing protein 3 (155 aa).

Residues 3-88 (LQEDFEEYAE…VKQLQEEAAA (86 aa)) form the ACB domain. An acyl-CoA is bound by residues Lys15, 30–34 (YGLYK), Lys56, and Tyr75.

It belongs to the ACBP family. Highly expressed in leaves. Expressed at low levels in roots and seeds.

Its subcellular location is the cytoplasm. The protein localises to the cytosol. Binds medium- and long-chain acyl-CoA esters with high affinity. Can interact in vitro with linolenoyl-CoA. Binds phosphatidic acid (PA) and phosphatidylcholine (PC) in vitro. May play a role in the biosynthesis of phospholipids. The chain is Acyl-CoA-binding domain-containing protein 3 from Oryza sativa subsp. japonica (Rice).